Here is a 264-residue protein sequence, read N- to C-terminus: Acyl-[acyl-carrier-protein]--UDP-N-acetylglucosamine O-acyltransferase (264 aa).

The protein belongs to the transferase hexapeptide repeat family. LpxA subfamily. As to quaternary structure, homotrimer.

The protein resides in the cytoplasm. It carries out the reaction a (3R)-hydroxyacyl-[ACP] + UDP-N-acetyl-alpha-D-glucosamine = a UDP-3-O-[(3R)-3-hydroxyacyl]-N-acetyl-alpha-D-glucosamine + holo-[ACP]. Its pathway is glycolipid biosynthesis; lipid IV(A) biosynthesis; lipid IV(A) from (3R)-3-hydroxytetradecanoyl-[acyl-carrier-protein] and UDP-N-acetyl-alpha-D-glucosamine: step 1/6. Functionally, involved in the biosynthesis of lipid A, a phosphorylated glycolipid that anchors the lipopolysaccharide to the outer membrane of the cell. This chain is Acyl-[acyl-carrier-protein]--UDP-N-acetylglucosamine O-acyltransferase, found in Chlorobaculum parvum (strain DSM 263 / NCIMB 8327) (Chlorobium vibrioforme subsp. thiosulfatophilum).